Consider the following 410-residue polypeptide: Peptidase T (410 aa).

Residue His79 participates in Zn(2+) binding. Residue Asp81 is part of the active site. A Zn(2+)-binding site is contributed by Asp142. The Proton acceptor role is filled by Glu176. Residues Glu177, Asp199, and His381 each contribute to the Zn(2+) site.

Belongs to the peptidase M20B family. The cofactor is Zn(2+).

Its subcellular location is the cytoplasm. The catalysed reaction is Release of the N-terminal residue from a tripeptide.. Cleaves the N-terminal amino acid of tripeptides. The protein is Peptidase T of Bacillus cereus (strain B4264).